Consider the following 188-residue polypeptide: GPI-anchored hemophore ARB_01017 (188 aa).

An N-terminal signal peptide occupies residues 1-17; that stretch reads MKLSVVALAALVSVAAA. The CFEM domain maps to 18–107; the sequence is QGVSELPKCA…SSSSGSASST (90 aa). 4 disulfide bridges follow: Cys-26–Cys-64, Cys-30–Cys-59, Cys-39–Cys-45, and Cys-47–Cys-80. Asp-42 lines the heme pocket. A disordered region spans residues 95–163; the sequence is TGGSSSSGSA…ATSTGAPTQT (69 aa). A lipid anchor (GPI-anchor amidated asparagine) is attached at Asn-165. Residues 166–188 constitute a propeptide, removed in mature form; it reads AAASVNANGGLLAAIAALVIAVA.

This sequence belongs to the RBT5 family. The GPI-anchor is attached to the protein in the endoplasmic reticulum and serves to target the protein to the cell surface. There, the glucosamine-inositol phospholipid moiety is cleaved off and the GPI-modified mannoprotein is covalently attached via its lipidless GPI glycan remnant to the 1,6-beta-glucan of the outer cell wall layer.

It localises to the secreted. The protein resides in the cell wall. The protein localises to the cell membrane. In terms of biological role, GPI-anchored cell wall protein involved in stabilizing the cell wall. The protein is GPI-anchored hemophore ARB_01017 of Arthroderma benhamiae (strain ATCC MYA-4681 / CBS 112371) (Trichophyton mentagrophytes).